The primary structure comprises 40 residues: Small polypeptide DEVIL 6 (40 aa).

Residues Ser9–Asp40 are required for DVL/RTFL small polypeptide activity. A helical transmembrane segment spans residues Arg12–Ile28.

This sequence belongs to the DVL/RTFL small polypeptides family.

Its subcellular location is the cell membrane. Functionally, small polypeptide acting as a regulatory molecule which coordinates cellular responses required for differentiation, growth and development, probably by restricting polar cell proliferation in lateral organs and coordinating socket cell recruitment and differentiation at trichome sites. This is Small polypeptide DEVIL 6 from Arabidopsis thaliana (Mouse-ear cress).